The sequence spans 198 residues: Orotate phosphoribosyltransferase (198 aa).

5-phospho-alpha-D-ribose 1-diphosphate-binding positions include Arg-108, Lys-109, Lys-112, His-114, and 135-143 (EDVVTTGKS). The orotate site is built by Thr-139 and Arg-167.

This sequence belongs to the purine/pyrimidine phosphoribosyltransferase family. PyrE subfamily. Homodimer. Requires Mg(2+) as cofactor.

It catalyses the reaction orotidine 5'-phosphate + diphosphate = orotate + 5-phospho-alpha-D-ribose 1-diphosphate. Its pathway is pyrimidine metabolism; UMP biosynthesis via de novo pathway; UMP from orotate: step 1/2. In terms of biological role, catalyzes the transfer of a ribosyl phosphate group from 5-phosphoribose 1-diphosphate to orotate, leading to the formation of orotidine monophosphate (OMP). The protein is Orotate phosphoribosyltransferase of Synechocystis sp. (strain ATCC 27184 / PCC 6803 / Kazusa).